The chain runs to 695 residues: DNA topoisomerase 4 subunit B (695 aa).

Positions 1 to 53 (MSSSDKIPSLFGDDDALAPVPAAPFKASVEPRVEPTPRPIPPPPPSKTASAPG) are disordered. The segment covering 36–46 (TPRPIPPPPPS) has biased composition (pro residues). ATP is bound by residues Tyr-55, Asn-95, Asp-122, 164 to 170 (GLHGVGA), and Lys-397. Positions 477-591 (AELFIVEGDS…GGHLFLALPP (115 aa)) constitute a Toprim domain. Residues Glu-483, Asp-556, and Asp-558 each contribute to the Mg(2+) site.

The protein belongs to the type II topoisomerase family. ParE type 1 subfamily. In terms of assembly, heterotetramer composed of ParC and ParE. Mg(2+) is required as a cofactor. The cofactor is Mn(2+). Ca(2+) serves as cofactor.

The enzyme catalyses ATP-dependent breakage, passage and rejoining of double-stranded DNA.. Topoisomerase IV is essential for chromosome segregation. It relaxes supercoiled DNA. Performs the decatenation events required during the replication of a circular DNA molecule. This Caulobacter vibrioides (strain ATCC 19089 / CIP 103742 / CB 15) (Caulobacter crescentus) protein is DNA topoisomerase 4 subunit B.